The primary structure comprises 469 residues: Glutamate--tRNA ligase 1 (469 aa).

Positions Pro-9–Gly-19 match the 'HIGH' region motif. The Zn(2+) site is built by Cys-98, Cys-100, Cys-125, and Glu-127. The 'KMSKS' region signature appears at Arg-236–Arg-240. Lys-239 is an ATP binding site.

The protein belongs to the class-I aminoacyl-tRNA synthetase family. Glutamate--tRNA ligase type 1 subfamily. As to quaternary structure, monomer. It depends on Zn(2+) as a cofactor.

It localises to the cytoplasm. It catalyses the reaction tRNA(Glu) + L-glutamate + ATP = L-glutamyl-tRNA(Glu) + AMP + diphosphate. Catalyzes the attachment of glutamate to tRNA(Glu) in a two-step reaction: glutamate is first activated by ATP to form Glu-AMP and then transferred to the acceptor end of tRNA(Glu). The polypeptide is Glutamate--tRNA ligase 1 (Nitrosococcus oceani (strain ATCC 19707 / BCRC 17464 / JCM 30415 / NCIMB 11848 / C-107)).